Consider the following 506-residue polypeptide: ATP synthase subunit alpha (506 aa).

171 to 178 lines the ATP pocket; that stretch reads GDRQTGKT.

The protein belongs to the ATPase alpha/beta chains family. F-type ATPases have 2 components, CF(1) - the catalytic core - and CF(0) - the membrane proton channel. CF(1) has five subunits: alpha(3), beta(3), gamma(1), delta(1), epsilon(1). CF(0) has four main subunits: a(1), b(1), b'(1) and c(9-12).

The protein resides in the cellular thylakoid membrane. The catalysed reaction is ATP + H2O + 4 H(+)(in) = ADP + phosphate + 5 H(+)(out). Its function is as follows. Produces ATP from ADP in the presence of a proton gradient across the membrane. The alpha chain is a regulatory subunit. This chain is ATP synthase subunit alpha, found in Nostoc sp. (strain PCC 7120 / SAG 25.82 / UTEX 2576).